The sequence spans 500 residues: Glycerol kinase (500 aa).

Threonine 14 serves as a coordination point for ADP. Residues threonine 14, threonine 15, and serine 16 each coordinate ATP. A sn-glycerol 3-phosphate-binding site is contributed by threonine 14. Arginine 18 is an ADP binding site. Sn-glycerol 3-phosphate-binding residues include arginine 84, glutamate 85, and tyrosine 136. Arginine 84, glutamate 85, and tyrosine 136 together coordinate glycerol. Histidine 232 is subject to Phosphohistidine; by HPr. Aspartate 246 is a binding site for sn-glycerol 3-phosphate. Residues aspartate 246 and glutamine 247 each coordinate glycerol. Residues threonine 268 and glycine 311 each coordinate ADP. ATP-binding residues include threonine 268, glycine 311, glutamine 315, and glycine 412. ADP is bound by residues glycine 412 and asparagine 416.

It belongs to the FGGY kinase family. In terms of assembly, homotetramer and homodimer (in equilibrium). In terms of processing, the phosphoenolpyruvate-dependent sugar phosphotransferase system (PTS), including enzyme I, and histidine-containing protein (HPr) are required for the phosphorylation, which leads to the activation of the enzyme.

It catalyses the reaction glycerol + ATP = sn-glycerol 3-phosphate + ADP + H(+). It functions in the pathway polyol metabolism; glycerol degradation via glycerol kinase pathway; sn-glycerol 3-phosphate from glycerol: step 1/1. Activated by phosphorylation and inhibited by fructose 1,6-bisphosphate (FBP). Its function is as follows. Key enzyme in the regulation of glycerol uptake and metabolism. Catalyzes the phosphorylation of glycerol to yield sn-glycerol 3-phosphate. The sequence is that of Glycerol kinase from Limosilactobacillus reuteri (strain DSM 20016) (Lactobacillus reuteri).